We begin with the raw amino-acid sequence, 218 residues long: uncharacterized protein (218 aa).

Transmembrane regions (helical) follow at residues 19 to 39, 92 to 112, 124 to 144, 161 to 181, and 196 to 216; these read VFGF…FTII, FDYA…VSAV, YGLI…MILA, LLFE…IAPF, and YILM…EILL.

The protein resides in the cell membrane. This is an uncharacterized protein from Methanocaldococcus jannaschii (strain ATCC 43067 / DSM 2661 / JAL-1 / JCM 10045 / NBRC 100440) (Methanococcus jannaschii).